Consider the following 451-residue polypeptide: NADH-quinone oxidoreductase subunit D (451 aa).

Belongs to the complex I 49 kDa subunit family. As to quaternary structure, NDH-1 is composed of 14 different subunits. Subunits NuoB, C, D, E, F, and G constitute the peripheral sector of the complex.

The protein localises to the cell inner membrane. The enzyme catalyses a quinone + NADH + 5 H(+)(in) = a quinol + NAD(+) + 4 H(+)(out). NDH-1 shuttles electrons from NADH, via FMN and iron-sulfur (Fe-S) centers, to quinones in the respiratory chain. The immediate electron acceptor for the enzyme in this species is believed to be a menaquinone. Couples the redox reaction to proton translocation (for every two electrons transferred, four hydrogen ions are translocated across the cytoplasmic membrane), and thus conserves the redox energy in a proton gradient. The polypeptide is NADH-quinone oxidoreductase subunit D (Salinibacter ruber (strain DSM 13855 / M31)).